We begin with the raw amino-acid sequence, 430 residues long: Adenylosuccinate synthetase (430 aa).

Residues 12–18 (GDEGKGK) and 40–42 (GHT) each bind GTP. Residue D13 is the Proton acceptor of the active site. Mg(2+)-binding residues include D13 and G40. Residues 13-16 (DEGK), 38-41 (NAGH), T128, R142, Q223, T238, and R302 each bind IMP. Residue H41 is the Proton donor of the active site. Position 298–304 (298–304 (TTTGRPR)) interacts with substrate. GTP is bound by residues R304, 330–332 (SID), and 412–414 (SVG).

It belongs to the adenylosuccinate synthetase family. Homodimer. The cofactor is Mg(2+).

Its subcellular location is the cytoplasm. It carries out the reaction IMP + L-aspartate + GTP = N(6)-(1,2-dicarboxyethyl)-AMP + GDP + phosphate + 2 H(+). It participates in purine metabolism; AMP biosynthesis via de novo pathway; AMP from IMP: step 1/2. Its function is as follows. Plays an important role in the de novo pathway of purine nucleotide biosynthesis. Catalyzes the first committed step in the biosynthesis of AMP from IMP. In Streptococcus sanguinis (strain SK36), this protein is Adenylosuccinate synthetase.